Reading from the N-terminus, the 457-residue chain is Guanine nucleotide-binding protein subunit alpha homolog (457 aa).

A G-alpha domain is found at 131–457 (RQVKLLLLGA…QRNLNALMLQ (327 aa)). A G1 motif region spans residues 134–147 (KLLLLGAGESGKST). GTP contacts are provided by residues 139–146 (GAGESGKS), 274–280 (LHCRKAT), 299–303 (DVGGQ), 369–372 (NKTD), and A429. Positions 146 and 280 each coordinate Mg(2+). The G2 motif stretch occupies residues 272–280 (DILHCRKAT). Positions 295 to 304 (FVFVDVGGQR) are G3 motif. The interval 365–372 (ILFLNKTD) is G4 motif. The interval 427 to 432 (TTAIDT) is G5 motif.

Belongs to the G-alpha family. G(12) subfamily. As to quaternary structure, g proteins are composed of 3 units; alpha, beta and gamma. The alpha chain contains the guanine nucleotide binding site. In ovary, expressed in nurse cells and oocyte. In early embryos, distributed uniformly. At the extended germband stage, accumulates in the mesoderm.

The protein resides in the cytoplasm. Its function is as follows. May play a role in a signal transduction pathway used during gastrulation. Required specifically for the ventral furrow and posterior midgut invaginations, where it is necessary for coordinating cell shape changes. Guanine nucleotide-binding proteins (G proteins) are involved as modulators or transducers in various transmembrane signaling systems. This Drosophila melanogaster (Fruit fly) protein is Guanine nucleotide-binding protein subunit alpha homolog (cta).